We begin with the raw amino-acid sequence, 65 residues long: Large ribosomal subunit protein bL32 (65 aa).

This sequence belongs to the bacterial ribosomal protein bL32 family.

This is Large ribosomal subunit protein bL32 from Metamycoplasma arthritidis (strain 158L3-1) (Mycoplasma arthritidis).